The following is a 217-amino-acid chain: GTP cyclohydrolase-2 (217 aa).

A GTP-binding site is contributed by 50–54 (RIHSE). Residues cysteine 55, cysteine 66, and cysteine 68 each contribute to the Zn(2+) site. GTP-binding positions include glutamine 71, 93 to 95 (EGR), and threonine 115. The active-site Proton acceptor is aspartate 127. The active-site Nucleophile is arginine 129. The GTP site is built by threonine 150 and lysine 155.

It belongs to the GTP cyclohydrolase II family. It depends on Zn(2+) as a cofactor.

It carries out the reaction GTP + 4 H2O = 2,5-diamino-6-hydroxy-4-(5-phosphoribosylamino)-pyrimidine + formate + 2 phosphate + 3 H(+). It participates in cofactor biosynthesis; riboflavin biosynthesis; 5-amino-6-(D-ribitylamino)uracil from GTP: step 1/4. Its function is as follows. Catalyzes the conversion of GTP to 2,5-diamino-6-ribosylamino-4(3H)-pyrimidinone 5'-phosphate (DARP), formate and pyrophosphate. The protein is GTP cyclohydrolase-2 of Actinobacillus succinogenes (strain ATCC 55618 / DSM 22257 / CCUG 43843 / 130Z).